A 223-amino-acid polypeptide reads, in one-letter code: N-terminal Xaa-Pro-Lys N-methyltransferase 1-B (223 aa).

Residues Gly-69, Arg-74, Asp-91–Thr-93, Leu-119–Gln-120, and Gln-135 each bind S-adenosyl-L-methionine.

Belongs to the methyltransferase superfamily. NTM1 family.

Its subcellular location is the nucleus. The catalysed reaction is N-terminal L-alanyl-L-prolyl-L-lysyl-[protein] + 3 S-adenosyl-L-methionine = N-terminal N,N,N-trimethyl-L-alanyl-L-prolyl-L-lysyl-[protein] + 3 S-adenosyl-L-homocysteine + 3 H(+). The enzyme catalyses N-terminal L-seryl-L-prolyl-L-lysyl-[protein] + 3 S-adenosyl-L-methionine = N-terminal N,N,N-trimethyl-L-seryl-L-prolyl-L-lysyl-[protein] + 3 S-adenosyl-L-homocysteine + 3 H(+). It carries out the reaction N-terminal L-prolyl-L-prolyl-L-lysyl-[protein] + 2 S-adenosyl-L-methionine = N-terminal N,N-dimethyl-L-prolyl-L-prolyl-L-lysyl-[protein] + 2 S-adenosyl-L-homocysteine + 2 H(+). In terms of biological role, distributive alpha-N-methyltransferase that methylates the N-terminus of target proteins containing the N-terminal motif [Ala/Gly/Pro/Ser]-Pro-Lys when the initiator Met is cleaved. Specifically catalyzes mono-, di- or tri-methylation of the exposed alpha-amino group of the Ala, Gly or Ser residue in the [Ala/Gly/Ser]-Pro-Lys motif and mono- or di-methylation of Pro in the Pro-Pro-Lys motif. Required during mitosis for normal bipolar spindle formation and chromosome segregation via its action on target proteins. This is N-terminal Xaa-Pro-Lys N-methyltransferase 1-B (ntmt1-b) from Xenopus laevis (African clawed frog).